The following is a 244-amino-acid chain: High frequency lysogenization protein HflD homolog (244 aa).

Belongs to the HflD family.

Its subcellular location is the cytoplasm. It localises to the cell inner membrane. The chain is High frequency lysogenization protein HflD homolog from Acinetobacter baumannii (strain ATCC 17978 / DSM 105126 / CIP 53.77 / LMG 1025 / NCDC KC755 / 5377).